The following is a 176-amino-acid chain: UPF0098 protein Rv2140c (176 aa).

Thr-2 is modified (N-acetylthreonine).

The protein belongs to the UPF0098 family.

This is UPF0098 protein Rv2140c from Mycobacterium tuberculosis (strain ATCC 25618 / H37Rv).